The following is a 1065-amino-acid chain: Bifunctional cytochrome P450/NADPH--P450 reductase (1065 aa).

The tract at residues 1 to 479 is cytochrome P450; that stretch reads MEKKVSAIPQ…EDKLKNDEIK (479 aa). Cys405 contacts heme. An NADPH--P450 reductase region spans residues 480 to 1065; the sequence is QHVQKTPSII…RYGKDVWAGI (586 aa). The 140-residue stretch at 496-635 folds into the Flavodoxin-like domain; it reads LLVLYGSDTG…QLEQWKQNMW (140 aa). FMN contacts are provided by residues 502-507, 549-552, 583-585, and 591-593; these read SDTGVA, SYNG, CGD, and TYQ. The 234-residue stretch at 674 to 907 folds into the FAD-binding FR-type domain; the sequence is YEAVYASILE…RTPQSNFELP (234 aa).

In the N-terminal section; belongs to the cytochrome P450 family. Requires heme as cofactor. FAD is required as a cofactor. The cofactor is FMN.

The catalysed reaction is 2 oxidized [cytochrome P450] + NADPH = 2 reduced [cytochrome P450] + NADP(+) + H(+). It carries out the reaction an organic molecule + reduced [NADPH--hemoprotein reductase] + O2 = an alcohol + oxidized [NADPH--hemoprotein reductase] + H2O + H(+). Its function is as follows. Functions as a fatty acid monooxygenase. Catalyzes hydroxylation of fatty acids at omega-1, omega-2 and omega-3 positions, yielding primarily omega-1 and omega-2 hydroxylated products. Metabolizes unsaturated and saturated fatty acids as well as N-acylamino acids. Has a preference for long-chain unsaturated fatty acids over saturated fatty acids. Shows activity toward saturated fatty acids with a chain length of 9-18 carbons with preference for longer fatty acids. Also displays a NADPH-dependent reductase activity in the C-terminal domain, which allows electron transfer from NADPH to the heme iron of the cytochrome P450 N-terminal domain. The chain is Bifunctional cytochrome P450/NADPH--P450 reductase from Bacillus cereus (strain ATCC 14579 / DSM 31 / CCUG 7414 / JCM 2152 / NBRC 15305 / NCIMB 9373 / NCTC 2599 / NRRL B-3711).